The chain runs to 454 residues: Zinc finger protein 474 (454 aa).

Residues 48–85 (RGEKIKTNPRKNRPGTVILSKQSSRRIMSGSQPRPPVI) are disordered. Residues 66 to 79 (LSKQSSRRIMSGSQ) are compositionally biased toward polar residues. The C2HC/C3H-type 1 zinc-finger motif lies at 91–120 (GFRVCYICGREFGSQSLGIHEPQCLEKWRV). Cys-95, Cys-98, His-110, and Cys-114 together coordinate Zn(2+). The disordered stretch occupies residues 125 to 146 (LPKHLRRPEPSKPPPFSGSGSY). 5 consecutive C2HC/C3H-type zinc fingers follow at residues 162 to 191 (QLLP…KVEG), 218 to 247 (RTVI…KWKV), 281 to 310 (QLVS…QPSG), 352 to 381 (PTIV…KWHN), and 425 to 454 (QLVP…KVAK). Cys-166, Cys-169, His-181, Cys-185, Cys-222, Cys-225, His-237, and Cys-241 together coordinate Zn(2+). The disordered stretch occupies residues 256-282 (FRQPLPQKPQPLLTGQPKHAGPRQGQL). Cys-285, Cys-288, His-300, Cys-304, Cys-356, Cys-359, His-371, Cys-375, Cys-429, Cys-432, His-444, and Cys-448 together coordinate Zn(2+). The segment at 299–345 (VHQRSCKAQPSGPKVQDLTLGSRGGLKESTNPKPQRNMAAPPVTDKP) is disordered.

Zn(2+) serves as cofactor.

This Bos taurus (Bovine) protein is Zinc finger protein 474 (ZNF474).